The following is a 248-amino-acid chain: Triosephosphate isomerase (248 aa).

D-glyceraldehyde 3-phosphate contacts are provided by N10 and K12. H95 functions as the Electrophile in the catalytic mechanism. E165 serves as the catalytic Proton acceptor. Residues G171, L230, and 232-233 each bind D-glyceraldehyde 3-phosphate; that span reads GN.

It belongs to the triosephosphate isomerase family. In terms of assembly, homodimer.

The catalysed reaction is D-glyceraldehyde 3-phosphate = dihydroxyacetone phosphate. Its pathway is carbohydrate biosynthesis; gluconeogenesis. It participates in carbohydrate degradation; glycolysis; D-glyceraldehyde 3-phosphate from glycerone phosphate: step 1/1. Functionally, catalyzes the interconversion of glyceraldehyde 3-phosphate and dihydroxyacetone phosphate in the glycolytic and gluconeogenic pathways. The sequence is that of Triosephosphate isomerase from Plasmodium falciparum (isolate 3D7).